The primary structure comprises 280 residues: Vacuolar protein sorting-associated protein 71 (280 aa).

The span at 64–73 (RSEGDGNSIS) shows a compositional bias: polar residues. The disordered stretch occupies residues 64–92 (RSEGDGNSISRQDDRNSKNSHSFEERYTQ). Residues 74–92 (RQDDRNSKNSHSFEERYTQ) are compositionally biased toward basic and acidic residues. C244, C247, C256, C259, C264, C268, H272, and C277 together coordinate Zn(2+). An HIT-type zinc finger spans residues 244 to 277 (CSICGGYDSISSCVNCGNKICSVSCFKLHNETRC).

As to quaternary structure, belongs to the SWR1 complex at least composed of ACT1, ARP4, RVB1, RVB2, ARP6, YAF9, VPS71, VPS72, SWC3, SWC4, SWC5, SWR1 and HTZ1.

It localises to the nucleus. Its function is as follows. Participates in the catalytic exchange of histone H2A for the H2A variant HZT1, an euchromatin-specific factor, leading to chromatin remodeling and changes in transcription of targeted genes. Indirectly involved in vacuolar protein sorting. This Saccharomyces cerevisiae (strain ATCC 204508 / S288c) (Baker's yeast) protein is Vacuolar protein sorting-associated protein 71 (VPS71).